Consider the following 409-residue polypeptide: DEP domain-containing mTOR-interacting protein (409 aa).

Methionine 1 carries the N-acetylmethionine modification. The tract at residues 1–25 is disordered; sequence MEEGGSTGSAGSDSSTSGSGGAQQR. DEP domains follow at residues 36–119 and 145–219; these read TGEQ…RFRK and SPEN…QFRM. Residues 217–235 carry the DDEX motif motif; it reads FRMNFRRRRRLMELLNEKS. Phosphoserine; by MAPK3 is present on serine 235. Threonine 241 is subject to Phosphothreonine. 2 positions are modified to phosphoserine: serine 244 and serine 258. Threonine 259 is modified (phosphothreonine). Serine 263, serine 265, serine 280, serine 282, and serine 283 each carry phosphoserine. A phosphoserine; by CK1 mark is found at serine 286 and serine 287. Residues 286–291 carry the BetaTrCP degron motif motif; sequence SSGYFS. Phosphotyrosine; by SYK is present on tyrosine 289. At serine 291 the chain carries Phosphoserine; by CK1. A Phosphoserine; by MTOR modification is found at serine 293. A Phosphothreonine; by MTOR modification is found at threonine 295. Phosphoserine occurs at positions 297 and 298. Serine 299 is subject to Phosphoserine; by MTOR. In terms of domain architecture, PDZ spans 330-407; sequence TFTIVGDAVG…TIVMEVMEEL (78 aa).

As to quaternary structure, associated component of the mechanistic target of rapamycin complex 1 (mTORC1) which contains MTOR, MLST8 and RPTOR. Associated component of the mechanistic target of rapamycin complex 2 (mTORC2) which contains MTOR, MLST8, PROTOR1, RICTOR, MAPKAP1 and DEPTOR. Interacts (via PDZ domain) with MTOR; interacts with MTOR within both mTORC1 and mTORC2. Interacts (via PDZ domain) with MINAR1 (via N-terminus). Interacts with SIK3. In terms of processing, phosphorylation weakens interaction with MTOR within mTORC1 and mTORC2. Phosphorylated at Ser-286, Ser-287 and Ser-291 in response to mitogenic stimulation by MTOR: DEPTOR is either directly phosphorylated by MTOR or indirectly via proteins kinases that are activated by MTOR, such as CK1/CSNK1A1. Phosphorylation at Ser-286, Ser-287 and Ser-291 promotes ubiquitination by the SCF(BTRC) complex, followed by degradation. Phosphorylation at Ser-235 by MAPK3/ERK1 promotes deubiquitination by USP7, enhancing its stability. Phosphorylation at Tyr-289 by SYK impairs its interaction with MTOR, promoting mTORC1 and mTORC2 signaling. Ubiquitinated; leading to proteasomal degradation. Ubiquitination by the SCF(BTRC) and SCF(FBXW11) complexes following phosphorylation at Ser-286, Ser-287 and Ser-291 by MTOR, leads to its degradation by the proteasome. Deubiquitinated by OTUB1 in response to amino acid via a non-canonical mechanism, leading to DEPTOR stability. Deubiquitinated by USP7 following phosphorylation at Ser-235, promoting its stability.

It localises to the lysosome membrane. Its activity is regulated as follows. Inhibited upon phosphatidic acid-binding: phosphatidic acid produced upon mitogenic stimulation promotes DEPTOR dissociatiom from the mTORC1 and mTORC2 complexes, leading to their activation. Specifically binds unsaturated phosphatidic acid, such as 16:0-18:1, 18:0-18:1 and di-18:1. Inhibited when nutrients are present via a feedback loop: phosphorylation by MTOR promotes DEPTOR ubiquitination and degradation. In terms of biological role, negative regulator of the mTORC1 and mTORC2 complexes: inhibits the protein kinase activity of MTOR, thereby inactivating both complexes. DEPTOR inhibits mTORC1 and mTORC2 to induce autophagy. In contrast to AKT1S1/PRAS40, only partially inhibits mTORC1 activity. This Homo sapiens (Human) protein is DEP domain-containing mTOR-interacting protein.